We begin with the raw amino-acid sequence, 506 residues long: Allantoinase (506 aa).

Residues histidine 105, histidine 107, lysine 195, histidine 231, histidine 292, and aspartate 366 each contribute to the Zn(2+) site. Position 195 is an N6-carboxylysine (lysine 195).

This sequence belongs to the metallo-dependent hydrolases superfamily. Allantoinase family. Homotetramer. It depends on Zn(2+) as a cofactor. Carboxylation allows a single lysine to coordinate two zinc ions.

The enzyme catalyses (S)-allantoin + H2O = allantoate + H(+). It functions in the pathway nitrogen metabolism; (S)-allantoin degradation; allantoate from (S)-allantoin: step 1/1. Catalyzes the conversion of allantoin (5-ureidohydantoin) to allantoate by hydrolytic cleavage of the five-member hydantoin ring. Catalyzes the first step of the ureide allantoin degradation followed by the sequential activity of AAH, UGLYAH and UAH which allows a complete purine breakdown without the intermediate generation of urea. This is Allantoinase (ALN) from Arabidopsis thaliana (Mouse-ear cress).